A 742-amino-acid chain; its full sequence is Phosphatidylinositol 4-phosphate 5-kinase its3 (742 aa).

2 disordered regions span residues 1 to 21 (MKIDSNGIVNPHSITNEIPSY) and 82 to 228 (LFKE…PDIG). Composition is skewed to low complexity over residues 90–105 (PSNPTAHSPSSSSNDS) and 129–142 (PSSNSSSSPQLQNL). 2 stretches are compositionally biased toward polar residues: residues 158 to 181 (RSSSNPVTSSQQPPNDRSTLSSSQ) and 193 to 218 (EKNSSNAEPSGSRSGDRGTNVSTSGS). Positions 264-662 (GHENYVTAYN…RFYKFVESSI (399 aa)) constitute a PIPK domain. Residues 677-742 (QDGQRVNKQQ…RNVTTNTSSS (66 aa)) are disordered. Residues 680–719 (QRVNKQQSVNAGNVRTNNKHGSLNNNTAPSSRNAKSTSAH) are compositionally biased toward polar residues.

In terms of assembly, interacts with opy1 (via domain PH 1); the interaction is direct but opy1 does not appear to regulate its3 localization or function. In terms of processing, phosphorylated by casein kinase I. Phosphorylation inactivates the enzyme.

Its subcellular location is the cell membrane. It carries out the reaction a 1,2-diacyl-sn-glycero-3-phospho-(1D-myo-inositol 4-phosphate) + ATP = a 1,2-diacyl-sn-glycero-3-phospho-(1D-myo-inositol-4,5-bisphosphate) + ADP + H(+). Its function is as follows. Catalyzes the phosphorylation of phosphatidylinositol 4-phosphate on the fifth hydroxyl of the myo-inositol ring, to form phosphatidylinositol 4,5-bisphosphate. Involved, together with the calcineurin ppb1, in cytokinesis. The protein is Phosphatidylinositol 4-phosphate 5-kinase its3 (its3) of Schizosaccharomyces pombe (strain 972 / ATCC 24843) (Fission yeast).